The chain runs to 132 residues: L-ectoine synthase (132 aa).

This sequence belongs to the ectoine synthase family.

The catalysed reaction is (2S)-4-acetamido-2-aminobutanoate = L-ectoine + H2O. The protein operates within amine and polyamine biosynthesis; ectoine biosynthesis; L-ectoine from L-aspartate 4-semialdehyde: step 3/3. Catalyzes the circularization of gamma-N-acetyl-alpha,gamma-diaminobutyric acid (ADABA) to ectoine (1,4,5,6-tetrahydro-2-methyl-4-pyrimidine carboxylic acid), which is an excellent osmoprotectant. The polypeptide is L-ectoine synthase (Rhodococcus jostii (strain RHA1)).